The chain runs to 194 residues: A-type ATP synthase subunit E (194 aa).

Belongs to the V-ATPase E subunit family. As to quaternary structure, has multiple subunits with at least A(3), B(3), C, D, E, F, H, I and proteolipid K(x).

The protein localises to the cell membrane. Functionally, component of the A-type ATP synthase that produces ATP from ADP in the presence of a proton gradient across the membrane. This chain is A-type ATP synthase subunit E, found in Saccharolobus islandicus (strain Y.N.15.51 / Yellowstone #2) (Sulfolobus islandicus).